A 252-amino-acid polypeptide reads, in one-letter code: Mannose-P-dolichol utilization defect 1 protein homolog (252 aa).

In terms of domain architecture, PQ-loop 1 spans 34–100 (KALLSKGLGL…HGYPFSAWGD (67 aa)). Transmembrane regions (helical) follow at residues 41-61 (LGLA…LKIL), 69-89 (INIV…SYNF), 98-118 (WGDS…VLFF), 126-146 (GLFL…LTPM), 148-168 (VLFT…LSQA), 180-200 (LSAA…FTSI), and 207-227 (MIIL…GQLI). The region spanning 157 to 211 (IPILLVGKLSQAYTNYQAGSTGQLSAATVIMMFAGSVARIFTSIQETGDFMIILT) is the PQ-loop 2 domain.

Belongs to the MPDU1 (TC 2.A.43.3) family.

It localises to the membrane. The protein is Mannose-P-dolichol utilization defect 1 protein homolog of Drosophila melanogaster (Fruit fly).